The sequence spans 126 residues: Small ribosomal subunit protein uS12m (126 aa).

Disordered stretches follow at residues 1–27 (MPTM…LNKC) and 106–126 (GIPG…KDYI). Composition is skewed to basic residues over residues 12 to 23 (RESKRRTKRTRA) and 109 to 120 (GRRRGRSKYGTK).

This sequence belongs to the universal ribosomal protein uS12 family.

Its subcellular location is the mitochondrion. In terms of biological role, protein S12 is involved in the translation initiation step. In Marchantia polymorpha (Common liverwort), this protein is Small ribosomal subunit protein uS12m (RPS12).